The sequence spans 200 residues: LHFPL tetraspan subfamily member 6 protein (200 aa).

Residues 1 to 23 (MASSLTCTGVIWALLSFLSAATS) form the signal peptide. Transmembrane regions (helical) follow at residues 84-104 (ICTIVTGLGCGLLLLVALTAL), 123-143 (GIQFLGGLLIGAGCALYPLGW), and 166-186 (IGWAYYCTGAGAAAAMLLCTW).

The protein belongs to the LHFP family.

It is found in the membrane. This Mus musculus (Mouse) protein is LHFPL tetraspan subfamily member 6 protein.